A 417-amino-acid chain; its full sequence is Spermidine/putrescine import ATP-binding protein PotA (417 aa).

The ABC transporter domain maps to 5-308; the sequence is IILKDLTKVF…PANRFVAQFV (304 aa). 37–44 is a binding site for ATP; the sequence is GPSGCGKT. The insert stretch occupies residues 105–177; that stretch reads DFNSKIKDNL…TALKCKKINK (73 aa).

Belongs to the ABC transporter superfamily. Spermidine/putrescine importer (TC 3.A.1.11.1) family. The complex is composed of two ATP-binding proteins (PotA), two transmembrane proteins (PotB and PotC) and a solute-binding protein (PotD).

It is found in the cell membrane. The catalysed reaction is ATP + H2O + polyamine-[polyamine-binding protein]Side 1 = ADP + phosphate + polyamineSide 2 + [polyamine-binding protein]Side 1.. In terms of biological role, part of the ABC transporter complex PotABCD involved in spermidine/putrescine import. Responsible for energy coupling to the transport system. This chain is Spermidine/putrescine import ATP-binding protein PotA, found in Aster yellows witches'-broom phytoplasma (strain AYWB).